Here is a 451-residue protein sequence, read N- to C-terminus: Ammonium transporter Rh type B (451 aa).

The Cytoplasmic portion of the chain corresponds to methionine 1–lysine 11. The helical transmembrane segment at leucine 12–glutamine 32 threads the bilayer. Over tyrosine 33–aspartate 63 the chain is Extracellular. N-linked (GlcNAc...) asparagine glycosylation is present at asparagine 44. Residues valine 64–phenylalanine 84 traverse the membrane as a helical segment. The Cytoplasmic portion of the chain corresponds to glycine 85–valine 87. The helical transmembrane segment at glycine 88–phenylalanine 108 threads the bilayer. Residues histidine 109–glutamate 121 are Extracellular-facing. A helical membrane pass occupies residues serine 122–glycine 142. Over lysine 143–threonine 151 the chain is Cytoplasmic. The chain crosses the membrane as a helical span at residues methionine 152–glycine 172. At threonine 173–alanine 176 the chain is on the extracellular side. The helical transmembrane segment at glycine 177–leucine 197 threads the bilayer. The Cytoplasmic portion of the chain corresponds to tyrosine 198 to aspartate 216. A helical membrane pass occupies residues leucine 217–isoleucine 237. At threonine 238–threonine 247 the chain is on the extracellular side. The helical transmembrane segment at alanine 248–serine 270 threads the bilayer. Over histidine 271–lysine 274 the chain is Cytoplasmic. A helical transmembrane segment spans residues leucine 275–glycine 295. The Extracellular portion of the chain corresponds to glutamate 296–methionine 298. The chain crosses the membrane as a helical span at residues leucine 299–phenylalanine 319. Over lysine 320–asparagine 340 the chain is Cytoplasmic. A helical membrane pass occupies residues leucine 341–threonine 361. The Extracellular portion of the chain corresponds to methionine 362 to glutamine 390. Residues alanine 391–glycine 411 form a helical membrane-spanning segment. At threonine 412–serine 451 the chain is on the cytoplasmic side.

This sequence belongs to the ammonium transporter (TC 2.A.49) family. Rh subfamily.

It is found in the basolateral cell membrane. Its subcellular location is the cytoplasmic vesicle membrane. Functionally, functions as an ammonia transporter. May play a role in the elimination of ammonia in the gill. This is Ammonium transporter Rh type B (rhbg) from Tetraodon nigroviridis (Spotted green pufferfish).